The following is a 235-amino-acid chain: Small ribosomal subunit protein uS3 (235 aa).

The region spanning 39–107 is the KH type-2 domain; that stretch reads VRQFLNKELA…PAQINIAEVK (69 aa). Positions 215–226 are enriched in low complexity; it reads AQQPEQQPATPK. Residues 215-235 form a disordered region; the sequence is AQQPEQQPATPKKAPRGKGRK.

It belongs to the universal ribosomal protein uS3 family. As to quaternary structure, part of the 30S ribosomal subunit. Forms a tight complex with proteins S10 and S14.

Functionally, binds the lower part of the 30S subunit head. Binds mRNA in the 70S ribosome, positioning it for translation. The protein is Small ribosomal subunit protein uS3 of Histophilus somni (strain 129Pt) (Haemophilus somnus).